Here is a 503-residue protein sequence, read N- to C-terminus: tRNA-2-methylthio-N(6)-dimethylallyladenosine synthase (503 aa).

One can recognise an MTTase N-terminal domain in the interval 5 to 121 (RSYEIRTFGC…LPVLLERARH (117 aa)). The [4Fe-4S] cluster site is built by C14, C50, C84, C158, C162, and C165. In terms of domain architecture, Radical SAM core spans 144–380 (RESAYAGWVS…IALQEEISLA (237 aa)). The 71-residue stretch at 383-453 (RELIGTEVEL…PHHLIADAPV (71 aa)) folds into the TRAM domain.

The protein belongs to the methylthiotransferase family. MiaB subfamily. Monomer. Requires [4Fe-4S] cluster as cofactor.

The protein localises to the cytoplasm. It carries out the reaction N(6)-dimethylallyladenosine(37) in tRNA + (sulfur carrier)-SH + AH2 + 2 S-adenosyl-L-methionine = 2-methylsulfanyl-N(6)-dimethylallyladenosine(37) in tRNA + (sulfur carrier)-H + 5'-deoxyadenosine + L-methionine + A + S-adenosyl-L-homocysteine + 2 H(+). Functionally, catalyzes the methylthiolation of N6-(dimethylallyl)adenosine (i(6)A), leading to the formation of 2-methylthio-N6-(dimethylallyl)adenosine (ms(2)i(6)A) at position 37 in tRNAs that read codons beginning with uridine. The chain is tRNA-2-methylthio-N(6)-dimethylallyladenosine synthase from Nocardia farcinica (strain IFM 10152).